The primary structure comprises 173 residues: Secreted RxLR effector protein RXLR-C12 (173 aa).

The N-terminal stretch at 1–18 is a signal peptide; sequence MLQFATAFLAISANVVMT. The short motif at 41–55 is the RxLR-dEER element; that stretch reads RRLRTHEIGTVPEER. The N-linked (GlcNAc...) asparagine glycan is linked to Asn-155.

Belongs to the RxLR effector family.

The protein localises to the secreted. Its subcellular location is the host cytoplasm. It is found in the host nucleus. In terms of biological role, secreted effector that suppresses pattern-triggered immunity (PTI) in plant host. The sequence is that of Secreted RxLR effector protein RXLR-C12 from Plasmopara halstedii (Downy mildew of sunflower).